A 130-amino-acid chain; its full sequence is Small ribosomal subunit protein uS11c (130 aa).

It belongs to the universal ribosomal protein uS11 family. Part of the 30S ribosomal subunit.

The protein resides in the plastid. It localises to the chloroplast. This Guillardia theta (Cryptophyte) protein is Small ribosomal subunit protein uS11c.